The sequence spans 475 residues: BTB/POZ domain-containing protein 10 (475 aa).

Residues 1 to 143 form a disordered region; that stretch reads MAGRPHPYDG…SSQSSSDGSC (143 aa). Residues 22–31 show a composition bias toward basic residues; the sequence is LHSRPRKLYK. The span at 57–80 shows a compositional bias: basic and acidic residues; it reads GHERSRDRRRSSDRSRDSSHERTE. The span at 81–94 shows a compositional bias: polar residues; that stretch reads SQLTPCIRNVTSPT. Residues 97–107 are compositionally biased toward basic and acidic residues; the sequence is HHVEREKDHSS. The span at 108-142 shows a compositional bias: low complexity; it reads SRPSSPRPQKASPNGSISSAGNSSRNSSQSSSDGS. Residues 146–475 are interaction with AKT family members; the sequence is AGEMVFVYEN…LDPDAQNPML (330 aa). The BTB domain occupies 167 to 241; sequence ERVTLIVDNT…YKTGIIRCPD (75 aa). The interval 455–475 is disordered; it reads LPIHPPSGNSDLDPDAQNPML.

In terms of assembly, interacts (via C-terminal 330-amino-acid region) with AKT1; AKT2 and AKT3. Interacts with PPP2CA and PPP1CA. Ubiquitously expressed. Highly expressed in adult brain, testis, aorta and small intestine and weakly expressed in the heart, lung, liver, kidney, pancreas, spleen, thymus, prostate, ovary and colon. Down-regulated in glioma.

Its subcellular location is the nucleus. It localises to the cytoplasm. Functionally, plays a major role as an activator of AKT family members by inhibiting PPP2CA-mediated dephosphorylation, thereby keeping AKTs activated. Plays a role in preventing motor neuronal death and accelerating the growth of pancreatic beta cells. This Homo sapiens (Human) protein is BTB/POZ domain-containing protein 10 (BTBD10).